The sequence spans 156 residues: Small ribosomal subunit protein uS7 (156 aa).

It belongs to the universal ribosomal protein uS7 family. Part of the 30S ribosomal subunit. Contacts proteins S9 and S11.

In terms of biological role, one of the primary rRNA binding proteins, it binds directly to 16S rRNA where it nucleates assembly of the head domain of the 30S subunit. Is located at the subunit interface close to the decoding center, probably blocks exit of the E-site tRNA. In Brachyspira hyodysenteriae (strain ATCC 49526 / WA1), this protein is Small ribosomal subunit protein uS7.